Consider the following 303-residue polypeptide: ATP phosphoribosyltransferase (303 aa).

It belongs to the ATP phosphoribosyltransferase family. Long subfamily. Mg(2+) serves as cofactor.

It is found in the cytoplasm. The catalysed reaction is 1-(5-phospho-beta-D-ribosyl)-ATP + diphosphate = 5-phospho-alpha-D-ribose 1-diphosphate + ATP. The protein operates within amino-acid biosynthesis; L-histidine biosynthesis; L-histidine from 5-phospho-alpha-D-ribose 1-diphosphate: step 1/9. Its activity is regulated as follows. Feedback inhibited by histidine. Catalyzes the condensation of ATP and 5-phosphoribose 1-diphosphate to form N'-(5'-phosphoribosyl)-ATP (PR-ATP). Has a crucial role in the pathway because the rate of histidine biosynthesis seems to be controlled primarily by regulation of HisG enzymatic activity. The sequence is that of ATP phosphoribosyltransferase from Haemophilus influenzae (strain PittGG).